The chain runs to 121 residues: Large ribosomal subunit protein uL14 (121 aa).

This sequence belongs to the universal ribosomal protein uL14 family. Part of the 50S ribosomal subunit. Forms a cluster with proteins L3 and L19. In the 70S ribosome, L14 and L19 interact and together make contacts with the 16S rRNA in bridges B5 and B8.

Functionally, binds to 23S rRNA. Forms part of two intersubunit bridges in the 70S ribosome. The protein is Large ribosomal subunit protein uL14 of Synechococcus sp. (strain CC9311).